Here is a 61-residue protein sequence, read N- to C-terminus: Small ribosomal subunit protein uS14B (61 aa).

Residues cysteine 24, cysteine 27, cysteine 40, and cysteine 43 each contribute to the Zn(2+) site.

It belongs to the universal ribosomal protein uS14 family. Zinc-binding uS14 subfamily. As to quaternary structure, part of the 30S ribosomal subunit. Contacts proteins S3 and S10. Zn(2+) serves as cofactor.

Binds 16S rRNA, required for the assembly of 30S particles and may also be responsible for determining the conformation of the 16S rRNA at the A site. The protein is Small ribosomal subunit protein uS14B of Lacticaseibacillus paracasei (strain ATCC 334 / BCRC 17002 / CCUG 31169 / CIP 107868 / KCTC 3260 / NRRL B-441) (Lactobacillus paracasei).